Here is an 811-residue protein sequence, read N- to C-terminus: MSSILNFYRNLLSVPLSFLVKNNPIPQQPIEELSLDISQPIIYLLPYTSQTDLIIIRKNCLSVGLPDPLEENELGGQCLPRYVFLDEGRRFFKSKGAKSATIQIVEKYLELHRSLPDLNVQLVPVSVLWGRSPGHEKQVGLPKLRLLNSIQKTAVAIWFGRDTFVRFSQAVSLRYMADEYGTDASIALKLARVAKIHFAKQRMSATGPRLPNRQAMFNKLLQSPAILNAIADEAKSKRISKEKARKEAYKILDEIAANVNYEGLRVADRFLGWLWNKLYQGIDVQNAERVRKLALEGHEIVYIPCHRSHIDYLLLSYVLYHQGLVPPHIAAGINLNFWPVGMMFRRGGAFFIRRTFKGNRLYSTIFREYLAELFHRGYSVEFFIEGGRSRTGRLLAPKTGMMSMTVQALQQNQIRPISVVPVYVGYEHVLEVDTYAKELRGAAKEKENAGLVLRVIRKLRNLGQGYVNFAEPITLSNYLNQHFPEWKDSQLEEHSQWFNPAVNAISNQVMININKAAAINAMNLTGTALLSSRQRALSREQLLEQLKSYQRFLQHAPYSNDIIVPTDTPEEILTHVLNLERVGLIVEKDNFGEMLRLERSAAVLMTYYRNNIQHVFVLPSLIASIIFHHGAIQKELVSNAARKIYPFLKEELFLHFSQDELDEYVEKIIEEFTRQKLILCAENLLSINKERVRVLQLWMAGVREILQRYYITVSILQDTPNIAKATLEKESQSIAQRLSVLHGINAPEFFDKAVFSAFIGSLRSNGYFDKNGVAITEKLNDISDILDRIISTEVQLTIKSAVGKHEEVQEY.

The HXXXXD motif motif lies at 305 to 310 (CHRSHI).

Belongs to the GPAT/DAPAT family.

It is found in the cell inner membrane. The enzyme catalyses sn-glycerol 3-phosphate + an acyl-CoA = a 1-acyl-sn-glycero-3-phosphate + CoA. It functions in the pathway phospholipid metabolism; CDP-diacylglycerol biosynthesis; CDP-diacylglycerol from sn-glycerol 3-phosphate: step 1/3. This is Glycerol-3-phosphate acyltransferase from Histophilus somni (strain 129Pt) (Haemophilus somnus).